Consider the following 641-residue polypeptide: Probable licABCH operon regulator (641 aa).

PRD domains are found at residues 184-289 (ILPK…TQSQ) and 296-403 (SIEE…KKTE). Phosphohistidine; by HPr occurs at positions 219, 278, 333, and 392. The region spanning 407 to 498 (KRCIIVCASG…ILSDEKEKAN (92 aa)) is the PTS EIIB type-2 domain. A Phosphocysteine; by EIIA modification is found at cysteine 413. The 140-residue stretch at 499–638 (RYLKKELVFF…QELSDVFDQK (140 aa)) folds into the PTS EIIA type-2 domain. Position 559 is a phosphohistidine; by EIIB (histidine 559).

The protein belongs to the transcriptional antiterminator BglG family.

Its activity is regulated as follows. The regulatory activity of LicR is modulated by phosphorylation and dephosphorylation of the various LicR domains. It becomes activated via phosphoryl group transfer from PEP, EI and HPr on the two conserved histidine residues in the PRD 2 domain, whereas phosphorylation of the EIIA-like domain on His-559 by the PTS EIIB component LicB inactivates LicR. Functionally, positive regulator of the licABCH operon. This is Probable licABCH operon regulator (licR) from Bacillus subtilis (strain 168).